A 351-amino-acid chain; its full sequence is uncharacterized protein (351 aa).

Mn(2+) contacts are provided by aspartate 215, aspartate 226, histidine 290, glutamate 319, and glutamate 333.

The protein belongs to the peptidase M24B family. Mn(2+) serves as cofactor.

This is an uncharacterized protein from Staphylococcus aureus (strain MW2).